Here is a 323-residue protein sequence, read N- to C-terminus: Protein REDOX 2 (323 aa).

Aspartate 53 contributes to the NADP(+) binding site. Tyrosine 58 functions as the Proton donor in the catalytic mechanism. Histidine 121 lines the substrate pocket. NADP(+)-binding positions include 167-168 (SN), glutamine 189, 215-220 (WSPLLS), and 289-297 (DQIHEIPQR). A disordered region spans residues 302–323 (GEEFMHPEGPIKSPEELWDGDL).

It belongs to the aldo/keto reductase family. As to quaternary structure, monomer. As to expression, expressed in leaf epidermis.

The catalysed reaction is 15alpha-stemmadenine + NADP(+) = 17-dehydrostemmadenine + NADPH + 2 H(+). It participates in alkaloid biosynthesis. Its function is as follows. Component of iboga and aspidosperma monoterpenoid indole alkaloids (MIAs, e.g. tabersonine and catharanthine) biosynthesis pathway from 19E-geissoschizine. Catalyzes the second oxidation step of the unstable intermediate product resulting from the reaction triggered by the geissoschizine oxidase (GO) in the stemmadenine biosynthesis process from 19E-geissoschizine. The sequence is that of Protein REDOX 2 from Catharanthus roseus (Madagascar periwinkle).